A 254-amino-acid polypeptide reads, in one-letter code: Probable electron transfer flavoprotein subunit beta (254 aa).

Belongs to the ETF beta-subunit/FixA family. As to quaternary structure, heterodimer of an alpha and a beta subunit. The cofactor is FAD. Requires AMP as cofactor.

Its subcellular location is the mitochondrion matrix. Its function is as follows. The electron transfer flavoprotein serves as a specific electron acceptor for several dehydrogenases, including five acyl-CoA dehydrogenases, glutaryl-CoA and sarcosine dehydrogenase. It transfers the electrons to the main mitochondrial respiratory chain via ETF-ubiquinone oxidoreductase (ETF dehydrogenase). This Schizosaccharomyces pombe (strain 972 / ATCC 24843) (Fission yeast) protein is Probable electron transfer flavoprotein subunit beta.